Reading from the N-terminus, the 155-residue chain is Fibroblast growth factor 2 (155 aa).

A propeptide spanning residues 1-9 (MAAGSITTL) is cleaved from the precursor. The tract at residues 1-20 (MAAGSITTLPALPEDGGSSA) is disordered. Asn36 provides a ligand contact to heparin. The short motif at 46 to 48 (DGR) is the Cell attachment site; atypical element. Tyr82 carries the phosphotyrosine; by TEC modification. The short motif at 88 to 90 (DGR) is the Cell attachment site; atypical element. A Glycyl lysine isopeptide (Lys-Gly) (interchain with G-Cter in SUMO1) cross-link involves residue Lys95. Residues 128–144 (KRTGQYKLGPKTGPGQK) are heparin-binding.

It belongs to the heparin-binding growth factors family. Monomer. Homodimer. Interacts with FGFR1, FGFR2, FGFR3 and FGFR4. Affinity between fibroblast growth factors (FGFs) and their receptors is increased by heparan sulfate glycosaminoglycans that function as coreceptors. Interacts with CSPG4, FGFBP1 and TEC. Found in a complex with FGFBP1, FGF1 and FGF2. Interacts with FGFBP3. Interacts with integrin ITGAV:ITGB3; the interaction is required for FGF2 signaling. Interacts with SNORC (via the extracellular domain). Interacts with glypican GPC3. Phosphorylation at Tyr-82 regulates FGF2 unconventional secretion.

The protein localises to the secreted. It localises to the nucleus. In terms of biological role, acts as a ligand for FGFR1, FGFR2, FGFR3 and FGFR4. Also acts as an integrin ligand which is required for FGF2 signaling. Binds to integrin ITGAV:ITGB3. Plays an important role in the regulation of cell survival, cell division, cell differentiation and cell migration. Functions as a potent mitogen in vitro. Can induce angiogenesis. Mediates phosphorylation of ERK1/2 and thereby promotes retinal lens fiber differentiation. This is Fibroblast growth factor 2 (FGF2) from Ovis aries (Sheep).